Consider the following 152-residue polypeptide: Probable ribose-5-phosphate isomerase B (152 aa).

10 to 11 (DH) contributes to the D-ribulose 5-phosphate binding site. Cys69 acts as the Proton acceptor in catalysis. Residue 70-74 (GTGVG) participates in D-ribulose 5-phosphate binding. His102 (proton donor) is an active-site residue. 4 residues coordinate D-ribulose 5-phosphate: Asp103, Arg113, Arg136, and Arg140.

The protein belongs to the LacAB/RpiB family. As to quaternary structure, homodimer.

It catalyses the reaction aldehydo-D-ribose 5-phosphate = D-ribulose 5-phosphate. The protein operates within carbohydrate degradation; pentose phosphate pathway; D-ribose 5-phosphate from D-ribulose 5-phosphate (non-oxidative stage): step 1/1. Catalyzes the interconversion of ribulose-5-P and ribose-5-P. The protein is Probable ribose-5-phosphate isomerase B of Mycoplasma genitalium (strain ATCC 33530 / DSM 19775 / NCTC 10195 / G37) (Mycoplasmoides genitalium).